The sequence spans 848 residues: Adenylate cyclase (848 aa).

Positions 1–535 (MYLYIETLKQ…DVSHHFPLRL (535 aa)) are catalytic. The tract at residues 541 to 848 (KALYSPCEIR…DAPLLQQYFS (308 aa)) is regulatory. His609 carries the phosphohistidine; by CRR modification.

The protein belongs to the adenylyl cyclase class-1 family.

It is found in the cytoplasm. The catalysed reaction is ATP = 3',5'-cyclic AMP + diphosphate. The polypeptide is Adenylate cyclase (cyaA) (Salmonella typhi).